A 251-amino-acid polypeptide reads, in one-letter code: 4-hydroxy-tetrahydrodipicolinate reductase (251 aa).

Residue 8–13 (GALGRM) coordinates NAD(+). Arg-36 is an NADP(+) binding site. NAD(+) contacts are provided by residues 89 to 91 (GTT) and 113 to 116 (TTNF). Residue His-145 is the Proton donor/acceptor of the active site. His-146 is a (S)-2,3,4,5-tetrahydrodipicolinate binding site. Lys-149 acts as the Proton donor in catalysis. Residue 155–156 (GT) participates in (S)-2,3,4,5-tetrahydrodipicolinate binding.

Belongs to the DapB family.

The protein localises to the cytoplasm. The catalysed reaction is (S)-2,3,4,5-tetrahydrodipicolinate + NAD(+) + H2O = (2S,4S)-4-hydroxy-2,3,4,5-tetrahydrodipicolinate + NADH + H(+). It carries out the reaction (S)-2,3,4,5-tetrahydrodipicolinate + NADP(+) + H2O = (2S,4S)-4-hydroxy-2,3,4,5-tetrahydrodipicolinate + NADPH + H(+). It participates in amino-acid biosynthesis; L-lysine biosynthesis via DAP pathway; (S)-tetrahydrodipicolinate from L-aspartate: step 4/4. Catalyzes the conversion of 4-hydroxy-tetrahydrodipicolinate (HTPA) to tetrahydrodipicolinate. The sequence is that of 4-hydroxy-tetrahydrodipicolinate reductase from Methanocorpusculum labreanum (strain ATCC 43576 / DSM 4855 / Z).